The primary structure comprises 107 residues: Phosphoribosyl-ATP pyrophosphatase (107 aa).

This sequence belongs to the PRA-PH family.

It is found in the cytoplasm. It catalyses the reaction 1-(5-phospho-beta-D-ribosyl)-ATP + H2O = 1-(5-phospho-beta-D-ribosyl)-5'-AMP + diphosphate + H(+). The protein operates within amino-acid biosynthesis; L-histidine biosynthesis; L-histidine from 5-phospho-alpha-D-ribose 1-diphosphate: step 2/9. This chain is Phosphoribosyl-ATP pyrophosphatase, found in Bacillus cereus (strain Q1).